The chain runs to 370 residues: Protein RKD5 (370 aa).

A disordered region spans residues 193–232; it reads DSETESEESVNEKTEHSEFENDKTEQSESDAKTEILKKKK. The span at 202-228 shows a compositional bias: basic and acidic residues; the sequence is VNEKTEHSEFENDKTEQSESDAKTEIL. Residues 224 to 309 form the RWP-RK domain; sequence KTEILKKKKR…AEKQQEKNEA (86 aa). The stretch at 283–328 forms a coiled coil; sequence HRKIKSLDCLIHDLQREAEKQQEKNEAAAMAVAKKQEKLETEKRNI. Positions 347–370 are disordered; that stretch reads NFKKRHRASRAKKNQESLVTSSST. Residues 349–358 are compositionally biased toward basic residues; it reads KKRHRASRAK.

The protein localises to the nucleus. In terms of biological role, putative transcription factor. In Arabidopsis thaliana (Mouse-ear cress), this protein is Protein RKD5 (RKD5).